The chain runs to 372 residues: Ligninase B (372 aa).

An N-terminal signal peptide occupies residues 1-21; the sequence is MAFKQLFAAISLALSLSAANA. Residues 22–28 constitute a propeptide that is removed on maturation; the sequence is AAVIEKR. Disulfide bonds link Cys-31–Cys-43, Cys-42–Cys-313, Cys-62–Cys-148, and Cys-277–Cys-345. Catalysis depends on His-75, which acts as the Proton acceptor. Ca(2+) is bound by residues Asp-76, Gly-94, Asp-96, and Ser-98. A heme b-binding site is contributed by His-204. 5 residues coordinate Ca(2+): Ser-205, Asp-222, Thr-224, Ile-227, and Asp-229. N-linked (GlcNAc...) asparagine glycosylation is present at Asn-285. The span at 350–361 shows a compositional bias: low complexity; it reads FPTLTTLPGPET. The interval 350-372 is disordered; sequence FPTLTTLPGPETSVQRIPPPPGA.

The protein belongs to the peroxidase family. Ligninase subfamily. Heme b is required as a cofactor. It depends on Ca(2+) as a cofactor.

It catalyses the reaction 1-(3,4-dimethoxyphenyl)-2-(2-methoxyphenoxy)propane-1,3-diol + H2O2 = 3,4-dimethoxybenzaldehyde + guaiacol + glycolaldehyde + H2O. The enzyme catalyses 2 (3,4-dimethoxyphenyl)methanol + H2O2 = 2 (3,4-dimethoxyphenyl)methanol radical + 2 H2O. The protein operates within secondary metabolite metabolism; lignin degradation. In terms of biological role, depolymerization of lignin. Catalyzes the C(alpha)-C(beta) cleavage of the propyl side chains of lignin. The protein is Ligninase B (LIPB) of Phanerodontia chrysosporium (White-rot fungus).